Reading from the N-terminus, the 265-residue chain is Osteoclast-associated immunoglobulin-like receptor (265 aa).

An N-terminal signal peptide occupies residues 1 to 18; that stretch reads MVLSLILQLSTLWPACRA. Over 19 to 231 the chain is Extracellular; the sequence is DFTPTAPLAS…LDYTQGNLIR (213 aa). 2 consecutive Ig-like domains span residues 22 to 115 and 125 to 218; these read PTAP…SQPS and QLPR…SFEG. A glycan (N-linked (GlcNAc...) asparagine) is linked at N47. C52 and C99 are oxidised to a cystine. N-linked (GlcNAc...) asparagine glycosylation occurs at N144. The chain crosses the membrane as a helical span at residues 232 to 248; sequence LGLAGMVLICLGIIVTC. The Cytoplasmic segment spans residues 249–265; it reads DWHSRSSAFDGLLPQQN.

It belongs to the leukocyte receptor complex/polymeric immunoglobulin receptor (PIR/LRC) family. In terms of tissue distribution, specifically expressed in preosteoclasts or mature osteoclasts.

The protein resides in the cell membrane. Regulator of osteoclastogenesis which plays an important bone-specific function in osteoclast differentiation. The sequence is that of Osteoclast-associated immunoglobulin-like receptor (Oscar) from Mus musculus (Mouse).